Consider the following 417-residue polypeptide: Serine hydroxymethyltransferase (417 aa).

(6S)-5,6,7,8-tetrahydrofolate-binding positions include Leu121 and 125–127; that span reads GHL. Lys229 bears the N6-(pyridoxal phosphate)lysine mark. 355-357 lines the (6S)-5,6,7,8-tetrahydrofolate pocket; sequence SPF.

This sequence belongs to the SHMT family. Homodimer. Pyridoxal 5'-phosphate is required as a cofactor.

It is found in the cytoplasm. The enzyme catalyses (6R)-5,10-methylene-5,6,7,8-tetrahydrofolate + glycine + H2O = (6S)-5,6,7,8-tetrahydrofolate + L-serine. It functions in the pathway one-carbon metabolism; tetrahydrofolate interconversion. It participates in amino-acid biosynthesis; glycine biosynthesis; glycine from L-serine: step 1/1. Catalyzes the reversible interconversion of serine and glycine with tetrahydrofolate (THF) serving as the one-carbon carrier. This reaction serves as the major source of one-carbon groups required for the biosynthesis of purines, thymidylate, methionine, and other important biomolecules. Also exhibits THF-independent aldolase activity toward beta-hydroxyamino acids, producing glycine and aldehydes, via a retro-aldol mechanism. This Xanthomonas campestris pv. campestris (strain 8004) protein is Serine hydroxymethyltransferase.